The following is a 231-amino-acid chain: MRTGLIARKLGMTRLFKEDGTHVPVTVLHLDQVQVVDTRTKERDGYTAVQLGFGQAKPKHVSKANKGHFARVKVEPKKKLVEFRVAEDAILEPGATLSAEHFLVGQKVDVTGTSKGKGFAGAMKRWNFAGLEASHGVSISHRSHGSTGNRQDPGKTFKNKKMAGHLGDERVTTQNVEVAHVDAARGLLMIRGSIPGAKGGYVLVRDAVKRKRPEGVAYPAALQADAAASEG.

N5-methylglutamine is present on glutamine 151.

Belongs to the universal ribosomal protein uL3 family. Part of the 50S ribosomal subunit. Forms a cluster with proteins L14 and L19. In terms of processing, methylated by PrmB.

Its function is as follows. One of the primary rRNA binding proteins, it binds directly near the 3'-end of the 23S rRNA, where it nucleates assembly of the 50S subunit. This chain is Large ribosomal subunit protein uL3, found in Granulibacter bethesdensis (strain ATCC BAA-1260 / CGDNIH1).